Reading from the N-terminus, the 107-residue chain is Large ribosomal subunit protein uL24 (107 aa).

This sequence belongs to the universal ribosomal protein uL24 family. In terms of assembly, part of the 50S ribosomal subunit.

One of two assembly initiator proteins, it binds directly to the 5'-end of the 23S rRNA, where it nucleates assembly of the 50S subunit. Functionally, one of the proteins that surrounds the polypeptide exit tunnel on the outside of the subunit. This chain is Large ribosomal subunit protein uL24, found in Nitratidesulfovibrio vulgaris (strain ATCC 29579 / DSM 644 / CCUG 34227 / NCIMB 8303 / VKM B-1760 / Hildenborough) (Desulfovibrio vulgaris).